The following is a 189-amino-acid chain: UPF0301 protein RT0098 (189 aa).

Belongs to the UPF0301 (AlgH) family.

This chain is UPF0301 protein RT0098, found in Rickettsia typhi (strain ATCC VR-144 / Wilmington).